The primary structure comprises 123 residues: NADH-quinone oxidoreductase subunit A (123 aa).

3 consecutive transmembrane segments (helical) span residues 11–31, 67–87, and 92–112; these read FPVLMFLLVGTGLGVALVSIG, LVAILFIIFDLETAFLFPWGV, and IGWPGFISMMIFLLEFLLGFA.

Belongs to the complex I subunit 3 family. In terms of assembly, NDH-1 is composed of 14 different subunits. Subunits NuoA, H, J, K, L, M, N constitute the membrane sector of the complex.

The protein resides in the cell inner membrane. The catalysed reaction is a quinone + NADH + 5 H(+)(in) = a quinol + NAD(+) + 4 H(+)(out). Its function is as follows. NDH-1 shuttles electrons from NADH, via FMN and iron-sulfur (Fe-S) centers, to quinones in the respiratory chain. The immediate electron acceptor for the enzyme in this species is believed to be ubiquinone. Couples the redox reaction to proton translocation (for every two electrons transferred, four hydrogen ions are translocated across the cytoplasmic membrane), and thus conserves the redox energy in a proton gradient. This chain is NADH-quinone oxidoreductase subunit A, found in Paraburkholderia phymatum (strain DSM 17167 / CIP 108236 / LMG 21445 / STM815) (Burkholderia phymatum).